We begin with the raw amino-acid sequence, 711 residues long: Polyribonucleotide nucleotidyltransferase (711 aa).

Residues D486 and D492 each coordinate Mg(2+). One can recognise a KH domain in the interval 553 to 612 (PRIHTIKINPDKIKDVIGKGGSVIRALTEETGTTIEIEDDGTVKIAATDGEKAKHAIRRI). Residues 622–690 (GRVYTGKVTR…RQGRIRLSIK (69 aa)) enclose the S1 motif domain. The interval 690–711 (KEATEQSQPAAAPEAPAAEQGE) is disordered. The span at 694 to 711 (EQSQPAAAPEAPAAEQGE) shows a compositional bias: low complexity.

The protein belongs to the polyribonucleotide nucleotidyltransferase family. Component of the RNA degradosome, which is a multiprotein complex involved in RNA processing and mRNA degradation. Requires Mg(2+) as cofactor.

It is found in the cytoplasm. The enzyme catalyses RNA(n+1) + phosphate = RNA(n) + a ribonucleoside 5'-diphosphate. In terms of biological role, involved in mRNA degradation. Catalyzes the phosphorolysis of single-stranded polyribonucleotides processively in the 3'- to 5'-direction. The chain is Polyribonucleotide nucleotidyltransferase from Shigella dysenteriae serotype 1 (strain Sd197).